Reading from the N-terminus, the 122-residue chain is Small ribosomal subunit protein uS12 (122 aa).

The tract at residues 1 to 45 (MPTTNQLVRKERKRQTKKTATPALQGSPQRRGVCTRVSTTTPKKP) is disordered. The span at 18–28 (KTATPALQGSP) shows a compositional bias: polar residues. Asp89 carries the post-translational modification 3-methylthioaspartic acid.

This sequence belongs to the universal ribosomal protein uS12 family. Part of the 30S ribosomal subunit. Contacts proteins S8 and S17. May interact with IF1 in the 30S initiation complex.

With S4 and S5 plays an important role in translational accuracy. In terms of biological role, interacts with and stabilizes bases of the 16S rRNA that are involved in tRNA selection in the A site and with the mRNA backbone. Located at the interface of the 30S and 50S subunits, it traverses the body of the 30S subunit contacting proteins on the other side and probably holding the rRNA structure together. The combined cluster of proteins S8, S12 and S17 appears to hold together the shoulder and platform of the 30S subunit. The protein is Small ribosomal subunit protein uS12 of Rubrobacter xylanophilus (strain DSM 9941 / JCM 11954 / NBRC 16129 / PRD-1).